The following is a 124-amino-acid chain: Small ribosomal subunit protein uS12 (124 aa).

The disordered stretch occupies residues 1 to 28 (MPTIQQLIRSERSKAKKKTKSPALKQCP). 3-methylthioaspartic acid is present on aspartate 89. Residues 101–124 (TLDAQGVKDRKQGRSKYGTKKPKE) are disordered. Basic residues predominate over residues 113–124 (GRSKYGTKKPKE).

Belongs to the universal ribosomal protein uS12 family. As to quaternary structure, part of the 30S ribosomal subunit. Contacts proteins S8 and S17. May interact with IF1 in the 30S initiation complex.

With S4 and S5 plays an important role in translational accuracy. In terms of biological role, interacts with and stabilizes bases of the 16S rRNA that are involved in tRNA selection in the A site and with the mRNA backbone. Located at the interface of the 30S and 50S subunits, it traverses the body of the 30S subunit contacting proteins on the other side and probably holding the rRNA structure together. The combined cluster of proteins S8, S12 and S17 appears to hold together the shoulder and platform of the 30S subunit. This Crocosphaera subtropica (strain ATCC 51142 / BH68) (Cyanothece sp. (strain ATCC 51142)) protein is Small ribosomal subunit protein uS12.